The following is a 208-amino-acid chain: CASP-like protein 4A4 (208 aa).

Residues Met-1–His-53 lie on the Cytoplasmic side of the membrane. A helical transmembrane segment spans residues Val-54–Leu-74. Residues Ala-75 to Ser-92 lie on the Extracellular side of the membrane. An N-linked (GlcNAc...) asparagine glycan is attached at Asn-89. A helical transmembrane segment spans residues Phe-93 to Thr-113. Topologically, residues Ser-114 to Phe-141 are cytoplasmic. Residues Ile-142 to Ile-162 form a helical membrane-spanning segment. The Extracellular segment spans residues Gln-163–Asn-176. Asn-175 carries N-linked (GlcNAc...) asparagine glycosylation. The helical transmembrane segment at Ser-177–Leu-197 threads the bilayer. Residues Ser-198 to Trp-208 lie on the Cytoplasmic side of the membrane.

It belongs to the Casparian strip membrane proteins (CASP) family. As to quaternary structure, homodimer and heterodimers.

The protein localises to the cell membrane. In Arabidopsis thaliana (Mouse-ear cress), this protein is CASP-like protein 4A4.